A 93-amino-acid chain; its full sequence is Co-chaperonin GroES (93 aa).

The protein belongs to the GroES chaperonin family. Heptamer of 7 subunits arranged in a ring. Interacts with the chaperonin GroEL.

The protein localises to the cytoplasm. Functionally, together with the chaperonin GroEL, plays an essential role in assisting protein folding. The GroEL-GroES system forms a nano-cage that allows encapsulation of the non-native substrate proteins and provides a physical environment optimized to promote and accelerate protein folding. GroES binds to the apical surface of the GroEL ring, thereby capping the opening of the GroEL channel. The polypeptide is Co-chaperonin GroES (Streptococcus gordonii).